The primary structure comprises 79 residues: Sulfur carrier protein TusA (79 aa).

Cysteine 17 functions as the Cysteine persulfide intermediate in the catalytic mechanism.

Belongs to the sulfur carrier protein TusA family.

The protein localises to the cytoplasm. Functionally, sulfur carrier protein which probably makes part of a sulfur-relay system. This is Sulfur carrier protein TusA from Haemophilus influenzae (strain PittEE).